The primary structure comprises 354 residues: Thymidylate synthase (354 aa).

The disordered stretch occupies residues 1–32; sequence MPAAGSEPSRPPSPPGVQEQSAEPRPPPPPHG. A dUMP-binding site is contributed by Arg53. Ser117 is modified (phosphoserine). Residue 178-179 coordinates dUMP; it reads RR. Cys198 functions as the Nucleophile in the catalytic mechanism. DUMP is bound by residues 218 to 221, Asn229, and 259 to 261; these read RSGD and HIY. Asp221 contributes to the (6R)-5,10-methylene-5,6,7,8-tetrahydrofolate binding site. Lys349 participates in a covalent cross-link: Glycyl lysine isopeptide (Lys-Gly) (interchain with G-Cter in SUMO2). Ala353 contributes to the (6R)-5,10-methylene-5,6,7,8-tetrahydrofolate binding site.

It belongs to the thymidylate synthase family. In terms of assembly, homodimer.

It localises to the nucleus. The protein resides in the cytoplasm. The protein localises to the mitochondrion. Its subcellular location is the mitochondrion matrix. It is found in the mitochondrion inner membrane. It catalyses the reaction dUMP + (6R)-5,10-methylene-5,6,7,8-tetrahydrofolate = 7,8-dihydrofolate + dTMP. Its pathway is pyrimidine metabolism; dTTP biosynthesis. Its function is as follows. Catalyzes the reductive methylation of 2'-deoxyuridine 5'-monophosphate (dUMP) to thymidine 5'-monophosphate (dTMP), using the cosubstrate, 5,10- methylenetetrahydrofolate (CH2H4folate) as a 1-carbon donor and reductant and contributes to the de novo mitochondrial thymidylate biosynthesis pathway. This Bos taurus (Bovine) protein is Thymidylate synthase (TYMS).